The primary structure comprises 551 residues: Synapse-associated protein of 47 kDa (551 aa).

2 disordered regions span residues 20 to 72 (AGDE…AGKR) and 117 to 198 (AMPA…GQGK). Composition is skewed to low complexity over residues 26–59 (PAPT…AAAA), 117–128 (AMPAMPSIPSIP), and 137–146 (DGAEGAEGAV). Phosphoserine occurs at positions 178 and 182. The span at 182–197 (SGGGTPTGDEGQIGQG) shows a compositional bias: gly residues. Residue T186 is modified to Phosphothreonine. One can recognise a BSD domain in the interval 295–347 (VDFEFSYDTAYPTAIAIMAEDKALETMRFELVPKIITEENFWRNYFYRVSLII). The interval 360–391 (VGQASSGEDANEVATKEKKSKTAEPAKGDSSV) is disordered. The segment covering 373–386 (ATKEKKSKTAEPAK) has biased composition (basic and acidic residues). A Phosphoserine modification is found at S433. Residues 487–551 (KDYEVVDEGG…DLIEDTDDLK (65 aa)) form a disordered region. A compositionally biased stretch (acidic residues) spans 514-523 (DDTEADEDEP). Over residues 524–535 (TISNLRTRSTNN) the composition is skewed to polar residues. Residue T530 is modified to Phosphothreonine. Acidic residues predominate over residues 536-551 (DWEEYADLIEDTDDLK).

Expressed specifically in neurons and transported to synaptic terminals.

In Drosophila melanogaster (Fruit fly), this protein is Synapse-associated protein of 47 kDa (Sap47).